Reading from the N-terminus, the 269-residue chain is ATP synthase subunit gamma, mitochondrial (269 aa).

F-type ATP synthases have 2 components, the catalytic core F(1) and the membrane-embedded component F(0), linked together by a central stalk and a peripheral stalk. The central stalk, also called rotor shaft, is often seen as part of F(1). The peripheral stalk is seen as part of F(0). F(0) contains the membrane channel next to the rotor. F-type ATP synthases form dimers but each monomer functions independently in ATP generation. The dimer consists of 18 different polypeptides: ATP1 (subunit alpha, part of F(1), 3 molecules per monomer), ATP2 (subunit beta, part of F(1), 3 molecules per monomer), ATP3 (subunit gamma, part of the central stalk), ATP4 (subunit b, part of the peripheral stalk), ATP5/OSCP (subunit 5/OSCP, part of the peripheral stalk), ATP6 (subunit a, part of the peripheral stalk), ATP7 (subunit d, part of the peripheral stalk), ATP8 (subunit 8, part of the peripheral stalk), OLI1 (subunit c, part of the rotor, 10 molecules per monomer), ATP14 (subunit h, part of the peripheral stalk), ATP15 (subunit epsilon, part of the central stalk), ATP16 (subunit delta, part of the central stalk), ATP17 (subunit f, part of the peripheral stalk), ATP18 (subunit i/j, part of the peripheral stalk). Dimer-specific subunits are ATP19 (subunit k, at interface between monomers), ATP20 (subunit g, at interface between monomers), TIM11 (subunit e, at interface between monomers). Also contains subunit L.

It localises to the mitochondrion inner membrane. Functionally, mitochondrial membrane ATP synthase (F(1)F(0) ATP synthase or Complex V) produces ATP from ADP in the presence of a proton gradient across the membrane which is generated by electron transport complexes of the respiratory chain. F-type ATP synthases consist of two structural domains, F(1) - containing the extramembraneous catalytic core, and F(0) - containing the membrane proton channel, linked together by a central stalk and a peripheral stalk. During catalysis, ATP synthesis in the catalytic domain of F(1) is coupled via a rotary mechanism of the central stalk subunits to proton translocation. Part of the complex F(1) domain and the central stalk which is part of the complex rotary element. The gamma/ATP3 subunit protrudes into the catalytic domain formed of alpha/ATP1(3)beta/ATP2(3). Rotation of the central stalk against the surrounding alpha/ATP1(3)beta/ATP2(3) subunits leads to hydrolysis of ATP in three separate catalytic sites on the beta/ATP2 subunits. The polypeptide is ATP synthase subunit gamma, mitochondrial (Pichia angusta (Yeast)).